A 295-amino-acid polypeptide reads, in one-letter code: Putative sugar uptake protein YxfA (295 aa).

10 helical membrane-spanning segments follow: residues 4–26 (VLLALVPMFAWGSIGFVANKFGG), 33–50 (LGMTLGAFVFALIVFLFR), 54–72 (LTWQIFLIGFIGGLLWAIG), 85–107 (VSVASPLSSGSQLVIGGLIGVFA), 117–135 (FILGFIAMAVLVVGFYFSA), 156–178 (ALTYSTLGYVIYVILFNNLAVLW), 188–206 (IILPMSVGMIFGALVMGRF), 213–235 (YVYQNMIVGAMWGVGNIFMLMAA), 241–263 (AIAFSFSQLGVIVSTIGGILFLG), and 270–291 (ELVYVGIGIVLFVTGAILLAIV).

Belongs to the GRP transporter (TC 2.A.7.5) family.

The protein resides in the cell membrane. This chain is Putative sugar uptake protein YxfA (yxfA), found in Lactococcus lactis subsp. lactis (strain IL1403) (Streptococcus lactis).